Consider the following 232-residue polypeptide: Large ribosomal subunit protein uL1 (232 aa).

The protein belongs to the universal ribosomal protein uL1 family. As to quaternary structure, part of the 50S ribosomal subunit.

Its function is as follows. Binds directly to 23S rRNA. The L1 stalk is quite mobile in the ribosome, and is involved in E site tRNA release. Functionally, protein L1 is also a translational repressor protein, it controls the translation of the L11 operon by binding to its mRNA. This is Large ribosomal subunit protein uL1 from Chlamydia trachomatis serovar D (strain ATCC VR-885 / DSM 19411 / UW-3/Cx).